A 258-amino-acid polypeptide reads, in one-letter code: Uridylate cyclase (258 aa).

In terms of domain architecture, Guanylate cyclase spans 50–190 (AAIFIDLRGS…DVVNKASKMC (141 aa)). Residue Phe-53 participates in a ribonucleoside 5'-triphosphate binding. 2 residues coordinate Mn(2+): Asp-55 and Asp-102.

This sequence belongs to the adenylyl cyclase class-4/guanylyl cyclase family. Pyrimidine cyclase subfamily. Homodimer. Requires Mn(2+) as cofactor.

The protein resides in the cytoplasm. It catalyses the reaction UTP = 3',5'-cyclic UMP + diphosphate. In terms of biological role, pycsar (pyrimidine cyclase system for antiphage resistance) provides immunity against bacteriophage. The pyrimidine cyclase (PycC) synthesizes cyclic nucleotides in response to infection; these serve as specific second messenger signals. The signals activate the adjacent effector, leading to bacterial cell death and abortive phage infection. A clade C Pycsar system. The pyrimidine cyclase gene of a two-gene Pycsar system, weakly generates cyclic UMP (cUMP) from UTP, has little to no activity on ATP, CTP or GTP. Expression of this and adjacent effector GmPycTM (AC P0DV43) probably confers resistance to bacteriophage. The genes are probably only expressed in response to bacteriophage infection. The sequence is that of Uridylate cyclase from Gulbenkiania mobilis.